We begin with the raw amino-acid sequence, 183 residues long: Small ribosomal subunit protein uS4c (183 aa).

An S4 RNA-binding domain is found at 82 to 143; the sequence is MRLDNILFRL…KQRSKALIQN (62 aa).

This sequence belongs to the universal ribosomal protein uS4 family. Part of the 30S ribosomal subunit. Contacts protein S5. The interaction surface between S4 and S5 is involved in control of translational fidelity.

It localises to the plastid. Its subcellular location is the chloroplast. Its function is as follows. One of the primary rRNA binding proteins, it binds directly to 16S rRNA where it nucleates assembly of the body of the 30S subunit. With S5 and S12 plays an important role in translational accuracy. This Sparaxis sp. (strain Lejeune 1997) protein is Small ribosomal subunit protein uS4c (rps4).